The chain runs to 474 residues: Glutamate--tRNA ligase (474 aa).

The short motif at 9–19 (PSPTGYLHVGG) is the 'HIGH' region element. A 'KMSKS' region motif is present at residues 240 to 244 (KLSKR). ATP is bound at residue lysine 243.

The protein belongs to the class-I aminoacyl-tRNA synthetase family. Glutamate--tRNA ligase type 1 subfamily. As to quaternary structure, monomer.

Its subcellular location is the cytoplasm. It catalyses the reaction tRNA(Glu) + L-glutamate + ATP = L-glutamyl-tRNA(Glu) + AMP + diphosphate. In terms of biological role, catalyzes the attachment of glutamate to tRNA(Glu) in a two-step reaction: glutamate is first activated by ATP to form Glu-AMP and then transferred to the acceptor end of tRNA(Glu). The sequence is that of Glutamate--tRNA ligase from Vibrio cholerae serotype O1 (strain ATCC 39315 / El Tor Inaba N16961).